Here is a 149-residue protein sequence, read N- to C-terminus: Chromophore lyase CpcS/CpeS homolog (149 aa).

It belongs to the CpcS/CpeS biliprotein lyase family.

Its subcellular location is the plastid. The protein resides in the chloroplast. Might function to covalently attach a chromophore to Cys residue(s) of phycobiliproteins. The chain is Chromophore lyase CpcS/CpeS homolog from Porphyra purpurea (Red seaweed).